Consider the following 139-residue polypeptide: ATP synthase epsilon chain (139 aa).

It belongs to the ATPase epsilon chain family. F-type ATPases have 2 components, CF(1) - the catalytic core - and CF(0) - the membrane proton channel. CF(1) has five subunits: alpha(3), beta(3), gamma(1), delta(1), epsilon(1). CF(0) has three main subunits: a, b and c.

It localises to the cell inner membrane. Functionally, produces ATP from ADP in the presence of a proton gradient across the membrane. The polypeptide is ATP synthase epsilon chain (Acinetobacter baylyi (strain ATCC 33305 / BD413 / ADP1)).